The chain runs to 466 residues: Glycylpeptide N-tetradecanoyltransferase (466 aa).

Positions 1–21 (MDNENNKNTKNSQQDSSFSEG) are disordered. Residues 8–19 (NTKNSQQDSSFS) are compositionally biased toward polar residues. Phosphoserine is present on Ser17. Tetradecanoyl-CoA is bound by residues 51–54 (FKFW), 185–187 (LCI), and 193–197 (SKRLT). Ile466 (proton acceptor; via carboxylate) is an active-site residue.

Belongs to the NMT family. As to quaternary structure, monomer.

It localises to the cytoplasm. The enzyme catalyses N-terminal glycyl-[protein] + tetradecanoyl-CoA = N-tetradecanoylglycyl-[protein] + CoA + H(+). Functionally, adds a myristoyl group to the N-terminal glycine residue of certain cellular proteins. The chain is Glycylpeptide N-tetradecanoyltransferase (nmt1) from Schizosaccharomyces pombe (strain 972 / ATCC 24843) (Fission yeast).